The primary structure comprises 302 residues: Ribosomal RNA small subunit methyltransferase A (302 aa).

S-adenosyl-L-methionine is bound by residues H15, L17, G42, E64, D89, and N109. The segment at 275 to 302 (DAASADGHDHGDGSGQGESSPGGARDQI) is disordered.

This sequence belongs to the class I-like SAM-binding methyltransferase superfamily. rRNA adenine N(6)-methyltransferase family. RsmA subfamily.

The protein resides in the cytoplasm. The enzyme catalyses adenosine(1518)/adenosine(1519) in 16S rRNA + 4 S-adenosyl-L-methionine = N(6)-dimethyladenosine(1518)/N(6)-dimethyladenosine(1519) in 16S rRNA + 4 S-adenosyl-L-homocysteine + 4 H(+). Functionally, specifically dimethylates two adjacent adenosines (A1518 and A1519) in the loop of a conserved hairpin near the 3'-end of 16S rRNA in the 30S particle. May play a critical role in biogenesis of 30S subunits. This Parasynechococcus marenigrum (strain WH8102) protein is Ribosomal RNA small subunit methyltransferase A.